The sequence spans 188 residues: dCTP deaminase (188 aa).

DCTP contacts are provided by residues 111 to 116, 135 to 137, glutamine 156, tyrosine 170, and glutamine 180; these read KSTYAR and TLE. The Proton donor/acceptor role is filled by glutamate 137.

Belongs to the dCTP deaminase family. Homotrimer.

It carries out the reaction dCTP + H2O + H(+) = dUTP + NH4(+). The protein operates within pyrimidine metabolism; dUMP biosynthesis; dUMP from dCTP (dUTP route): step 1/2. Functionally, catalyzes the deamination of dCTP to dUTP. The polypeptide is dCTP deaminase (Cupriavidus pinatubonensis (strain JMP 134 / LMG 1197) (Cupriavidus necator (strain JMP 134))).